The primary structure comprises 1205 residues: Bromodomain and PHD finger-containing protein 3 (1205 aa).

Disordered regions lie at residues 1-27 and 75-121; these read MRKP…KCSP and NSNK…SFRM. Ser-17 bears the Phosphoserine mark. Polar residues predominate over residues 75–84; it reads NSNKENSEQP. Over residues 89 to 99 the composition is skewed to basic residues; the sequence is KSKKPSSKGKK. A PHD-type 1 zinc finger spans residues 212 to 262; that stretch reads DAFCCVCLDDECHNSNVILFCDICNLAVHQECYGVPYIPEGQWLCRCCLQS. Residues 266 to 299 form a C2HC pre-PHD-type zinc finger; that stretch reads PVDCILCPNKGGAFKQTSDGHWAHVVCAIWIPEV. The PHD-type 2 zinc finger occupies 323–387; the sequence is LTCYICKQKG…RKTAYCEAHS (65 aa). A disordered region spans residues 387-472; that stretch reads SPPGAATARR…AGQDTPSTLP (86 aa). A phosphoserine mark is found at Ser-400 and Ser-403. Residues 417 to 432 show a composition bias toward acidic residues; the sequence is DGEEEEEEEVEEEEQE. Basic residues predominate over residues 444–456; that stretch reads VPKKSKMSLKQKI. An N6-acetyllysine mark is found at Lys-447, Lys-449, and Lys-671. One can recognise a Bromo domain in the interval 589–693; sequence LELMPFNVLL…DLGGAILRHA (105 aa). Phosphoserine occurs at positions 713 and 740. The tract at residues 779–897 is disordered; the sequence is RQKLAQPPPP…LQLGNEPLQR (119 aa). A compositionally biased stretch (acidic residues) spans 817–827; that stretch reads LQEEPEDDGDR. The segment covering 839–851 has biased composition (low complexity); it reads EPTGPAPSLSEQE. A Phosphoserine modification is found at Ser-900. Disordered regions lie at residues 907 to 926 and 931 to 1015; these read LSLM…VGRR and FKKA…SECS. The segment covering 942–955 has biased composition (basic and acidic residues); it reads RSPDRVLENGEDHG. Ser-962 and Ser-965 each carry phosphoserine. The span at 980-991 shows a compositional bias: basic and acidic residues; the sequence is SCSESEGERSPQ. Positions 1076-1159 constitute a PWWP domain; the sequence is PLELVWAKCR…RDKVLPLGVE (84 aa).

Component of some HBO1 complex composed of KAT7/HBO1, MEAF6, ING4 or ING5, and BRPF3. Component of the MOZ/MORF complex composed at least of ING5, KAT6A, KAT6B, MEAF6 and one of BRPF1, BRD1/BRPF2 and BRPF3. Interacts with KAT7/HBO1; the interaction is direct.

The protein localises to the nucleus. Functionally, scaffold subunit of various histone acetyltransferase (HAT) complexes, such as the MOZ/MORF and HBO1 complexes, which have a histone H3 acetyltransferase activity. Plays a role in DNA replication initiation by directing KAT7/HBO1 specificity towards histone H3 'Lys-14' acetylation (H3K14ac), thereby facilitating the activation of replication origins. Component of the MOZ/MORF complex which has a histone H3 acetyltransferase activity. In Homo sapiens (Human), this protein is Bromodomain and PHD finger-containing protein 3.